We begin with the raw amino-acid sequence, 254 residues long: MHTSLTVKNTVIGSGRTKIAVPLVARDAADLSSVLSQIKNLPFDIVEFRADFLECAGSIGEVLRHTQAVRDALPDKPLLFTFRRHCEGGSFPCSDDYYFELLDALIESRLPDIIDIELFSGETAVRRAVANAQKNGIAALLCNHEFHRTPPQEEIVCRLKQMEDCGADICKIAVMPQSSEDVLTLLSATLEAKRLVAKPVITMSMGQTGAVSRLAGQVFGSSITFGSGTQNSAPGQIGVSALRAALDCLESGAD.

3-dehydroquinate contacts are provided by residues 47–49 and arginine 83; that span reads EFR. Residue histidine 144 is the Proton donor/acceptor of the active site. The active-site Schiff-base intermediate with substrate is the lysine 171. Arginine 213, serine 232, and glutamine 236 together coordinate 3-dehydroquinate.

Belongs to the type-I 3-dehydroquinase family. In terms of assembly, homodimer.

The catalysed reaction is 3-dehydroquinate = 3-dehydroshikimate + H2O. The protein operates within metabolic intermediate biosynthesis; chorismate biosynthesis; chorismate from D-erythrose 4-phosphate and phosphoenolpyruvate: step 3/7. Involved in the third step of the chorismate pathway, which leads to the biosynthesis of aromatic amino acids. Catalyzes the cis-dehydration of 3-dehydroquinate (DHQ) and introduces the first double bond of the aromatic ring to yield 3-dehydroshikimate. The sequence is that of 3-dehydroquinate dehydratase from Neisseria gonorrhoeae (strain ATCC 700825 / FA 1090).